Consider the following 179-residue polypeptide: Large ribosomal subunit protein uL6 (179 aa).

This sequence belongs to the universal ribosomal protein uL6 family. Part of the 50S ribosomal subunit.

This protein binds to the 23S rRNA, and is important in its secondary structure. It is located near the subunit interface in the base of the L7/L12 stalk, and near the tRNA binding site of the peptidyltransferase center. The chain is Large ribosomal subunit protein uL6 from Nocardia farcinica (strain IFM 10152).